We begin with the raw amino-acid sequence, 218 residues long: Monomethylamine corrinoid protein 2 (218 aa).

Positions 1 to 91 (MTNTEIFNKL…ELEKTKVEGE (91 aa)) constitute a B12-binding N-terminal domain. A B12-binding domain is found at 94-218 (TGLAITFVAE…AAKVALNVMK (125 aa)). Methylcob(III)alamin is bound at residue histidine 107.

This sequence belongs to the methylamine corrinoid protein family. In terms of assembly, can form a complex with MtmB.

It functions in the pathway one-carbon metabolism; methanogenesis from methylamine. In terms of biological role, acts as a methyl group carrier between MtmB and MtbA. The protein is Monomethylamine corrinoid protein 2 (mtmC2) of Methanosarcina mazei (strain ATCC BAA-159 / DSM 3647 / Goe1 / Go1 / JCM 11833 / OCM 88) (Methanosarcina frisia).